The chain runs to 312 residues: Olfactory receptor OR51C1 (312 aa).

The Extracellular portion of the chain corresponds to 1–26 (MGSNITSTSIIFLLTGVPGLEAFHTW). A helical transmembrane segment spans residues 27 to 47 (ISIPFCFLSVTALLGNSLILF). Over 48-66 (ATITQPSLHEPMYYFLSML) the chain is Cytoplasmic. The helical transmembrane segment at 67 to 87 (SATDLGLSISTLVTMLSIFWF) threads the bilayer. The Extracellular segment spans residues 88–99 (NVREISFNACLS). Cys97 and Cys179 are oxidised to a cystine. Residues 100–120 (HMFFIKFFTVMESSVLLAMAF) form a helical membrane-spanning segment. The Cytoplasmic portion of the chain corresponds to 121–143 (DRFVAVSNPLRYAMILTDSRIAQ). Residues 144-164 (IGVASVIRGLLMLTPMVALLI) form a helical membrane-spanning segment. Over 165-201 (RLSYCHSQVLHHSYCYHPDVMKLSCTDTRINSAVGLT) the chain is Extracellular. A helical membrane pass occupies residues 202 to 222 (AMFSTVGVDLLLILLSYVLII). Over 223–240 (RTVLSVASPEERKETFST) the chain is Cytoplasmic. Residues 241–261 (CVSHIVAFAIYYIPLISLSIV) traverse the membrane as a helical segment. Topologically, residues 262-273 (HRFGKQAPAYVH) are extracellular. The helical transmembrane segment at 274–294 (TMIANTYLLISPLMNPVIYSV) threads the bilayer. The Cytoplasmic portion of the chain corresponds to 295 to 312 (KTKQIRRAVIKILHSKET).

The protein belongs to the G-protein coupled receptor 1 family.

The protein localises to the membrane. Odorant receptor. This is Olfactory receptor OR51C1 from Homo sapiens (Human).